The sequence spans 1195 residues: Protein PIP82 (1195 aa).

Low complexity predominate over residues Met1–His10. Disordered regions lie at residues Met1–Ser55, Lys85–Phe132, Asn291–Leu471, Lys493–Gly515, Gln544–Pro567, Glu613–Thr637, Met702–Lys771, Ser833–Ser977, and Gln1060–Ile1195. Residues Tyr11–His26 show a composition bias toward basic residues. The segment covering Arg37 to Asp50 has biased composition (basic and acidic residues). A compositionally biased stretch (low complexity) spans Gly109–Ala118. Polar residues predominate over residues Gln119 to Phe132. The span at His300 to Asp313 shows a compositional bias: basic and acidic residues. Over residues Gln351–Gln360 the composition is skewed to low complexity. Positions Ala361–Pro371 are enriched in pro residues. Residues Glu400–Glu450 are phospho-regulated basic and hydrophobic (PRBH) motif. Basic residues predominate over residues Asn422–Ser438. The span at Val494–Ala505 shows a compositional bias: basic and acidic residues. Positions Arg545–Pro560 are enriched in polar residues. Polar residues-rich tracts occupy residues Ser732–Pro742 and Arg856–Glu867. Acidic residues predominate over residues Gln872 to Asp891. 2 stretches are compositionally biased toward pro residues: residues Ser898 to Arg910 and Val925 to Ser939. Residues Val940–Arg968 show a composition bias toward low complexity. Over residues Gln1075 to Gln1085 the composition is skewed to polar residues. The span at Glu1086–Ser1095 shows a compositional bias: basic and acidic residues. Over residues Arg1102 to Glu1111 the composition is skewed to polar residues. 2 stretches are compositionally biased toward low complexity: residues Ser1114–Ser1149 and Ser1179–Ile1195.

Post-translationally, phosphorylated by aPKC which lowers lipid affinity and promotes dissociation from the cell cortex. In the photoreceptor cells, aPKC-mediated phosphorylation leads to its displacement from the stalk apical cortex and thus restricts its localization to the rhabdomeric apical cortex where it functions. Dephosphorylation appears to be light-dependent. As to expression, restricted to photoreceptor cells (at protein level). Not detected until approximately 48hrs after puparium formation (APF) and then maintained in the photoreceptor cells post-eclosion (at protein level).

It is found in the cytoplasm. The protein localises to the cell cortex. It localises to the cytosol. The protein resides in the cell projection. Its subcellular location is the rhabdomere. Its function is as follows. Required for the morphological differentiation and maintenance of the rhabdomeric photoreceptor apical domain. Acts as a downstream component of the gl and Pph13 transcriptional pathway which is required for photoreceptor cell development. Likely to function by regulating the trafficking or retention of rhabdomeric proteins including the phototransduction proteins ninaE and didum. This is Protein PIP82 from Drosophila melanogaster (Fruit fly).